The chain runs to 100 residues: Small ribosomal subunit protein uS14c (100 aa).

The protein belongs to the universal ribosomal protein uS14 family. Part of the 30S ribosomal subunit.

The protein localises to the plastid. Its subcellular location is the chloroplast. Its function is as follows. Binds 16S rRNA, required for the assembly of 30S particles. In Staurastrum punctulatum (Green alga), this protein is Small ribosomal subunit protein uS14c.